Here is a 303-residue protein sequence, read N- to C-terminus: MNDAKKYIVSVLILLVAGMFGGCIKEDYSDCPRPFRLTVRAWDADMQDITETGAVQRVVIFVFDETGRRIDRLMMDAAQVAARKPIPLEYDGPTTVSFVAWANPDDHMLEETANVQNVKDLFFRLSSTDGIAQSPGDLFSGVLTCPIEYGSIEQGTDQTVDIYRRTAQVHIIIRGYQEWLEANGPRQLPDYADILLGETPDTYTGLAELIGNAVQYRPDGQIQNGDFISPIFRVYPTLDTTPLHLKLYAYGQELLNISTGSDGVPFIPVIGKMLNIYIDLRGANLNVLVSVTPWDVVQQYAEY.

An N-terminal signal peptide occupies residues 1–22; the sequence is MNDAKKYIVSVLILLVAGMFGG. Cys-23 carries N-palmitoyl cysteine lipidation. Residue Cys-23 is the site of S-diacylglycerol cysteine attachment.

The protein belongs to the bacteroidetes fimbrillin superfamily. FimB/Mfa2 family. In terms of assembly, fimB is not part of the fimbrium itself, but anchors the fimbrium in the outer membrane. Linear, head-to-tail oligomerization of fimbrial subunits mediates assembly of the fimbrium stalk, while the minor components FimC, FimD and FimE probably form the fimbrium tip. The anchoring subunit FimB limits fimbrium length and is important for solid fimbrium attachment to the outer membrane. In its absence, the major fimbriae become very long and are easily detached from the membrane.

It localises to the cell outer membrane. Its function is as follows. Anchoring subunit of the major fimbriae. Regulates fimbrial length. These filamentous pili are attached to the cell surface; they mediate biofilm formation, adhesion onto host cells and onto other bacteria that are part of the oral microbiome. Fimbriae of P.gingivalis are major virulence factors. The sequence is that of Major fimbrium anchoring subunit FimB from Porphyromonas gingivalis (strain ATCC BAA-308 / W83).